The chain runs to 439 residues: Ectonucleotide pyrophosphatase/phosphodiesterase family member 7 (439 aa).

An N-terminal signal peptide occupies residues 1 to 21; it reads MGHSAVLLSVALVILPACVTG. Over 22–422 the chain is Extracellular; that stretch reads GPVQRQQQHK…RSGSPLSRQH (401 aa). Zn(2+)-binding residues include Asp-38 and Thr-74. Residues 71 to 77 are required for enzyme activity; it reads VTMTSPC. The active-site Nucleophile is the Thr-74. Asn-95 contributes to the substrate binding site. Residues Asn-99, Asn-120, Asn-145, and Asn-167 are each glycosylated (N-linked (GlcNAc...) asparagine). 4 residues coordinate Zn(2+): Asp-198, His-202, Asp-245, and His-246. An N-linked (GlcNAc...) asparagine glycan is attached at Asn-266. His-352 serves as a coordination point for Zn(2+). Residues 423–439 form a helical membrane-spanning segment; the sequence is HLVVVLMGILTGLAKVV.

It belongs to the nucleotide pyrophosphatase/phosphodiesterase family. Zn(2+) serves as cofactor. Post-translationally, N-glycosylated; required for activity and transport to the plasma membrane. Detected in small intestine (at protein level). Highly expressed in the jejunum.

The protein resides in the cell membrane. It carries out the reaction a sphingomyelin + H2O = phosphocholine + an N-acylsphing-4-enine + H(+). It catalyses the reaction a 1-O-alkyl-2-acetyl-sn-glycero-3-phosphocholine + H2O = a 1-O-alkyl-2-acetyl-sn-glycerol + phosphocholine + H(+). The catalysed reaction is 1-O-octadecyl-2-acetyl-sn-glycero-3-phosphocholine + H2O = 1-O-octadecyl-2-acetyl-sn-glycerol + phosphocholine + H(+). The enzyme catalyses 1-hexadecanoyl-sn-glycero-3-phosphocholine + H2O = 1-hexadecanoyl-sn-glycerol + phosphocholine + H(+). Platelet-activating factor hydrolysis is inhibited by higher amount of sphingomyelin. The hydrolysis of platelet-activating factor and sphingomyelin can be inhibited by the presence of sphingomyelin and platelet-activating factor respectively, the inhibition of platelet-activating factor hydrolysis by sphingomyelin being stronger. PAF hydrolysis is dose-dependently increased by both taurocholate (TC) and taurodeoxycholate (TDC). Hydrolase activity against PAF is inhibited by EDTA and stimulated by 0.1-0.25 mM Zn2+. In terms of biological role, choline-specific phosphodiesterase that hydrolyzes sphingomyelin (SM) releasing the ceramide and phosphocholine and therefore is involved in sphingomyelin digestion, ceramide formation, and fatty acid (FA) absorption in the gastrointestinal tract. Also has phospholipase C activity and can also cleave phosphocholine from palmitoyl lyso-phosphatidylcholine and platelet-activating factor (PAF) leading to its inactivation. Does not have nucleotide pyrophosphatase activity. May promote cholesterol absorption by affecting the levels of sphingomyelin derived from either diet or endogenous sources, in the intestinal lumen. The polypeptide is Ectonucleotide pyrophosphatase/phosphodiesterase family member 7 (Rattus norvegicus (Rat)).